The following is a 470-amino-acid chain: ATP synthase subunit beta (470 aa).

157–164 (GGAGVGKT) lines the ATP pocket.

This sequence belongs to the ATPase alpha/beta chains family. In terms of assembly, F-type ATPases have 2 components, CF(1) - the catalytic core - and CF(0) - the membrane proton channel. CF(1) has five subunits: alpha(3), beta(3), gamma(1), delta(1), epsilon(1). CF(0) has three main subunits: a(1), b(2) and c(9-12). The alpha and beta chains form an alternating ring which encloses part of the gamma chain. CF(1) is attached to CF(0) by a central stalk formed by the gamma and epsilon chains, while a peripheral stalk is formed by the delta and b chains.

The protein resides in the cell inner membrane. It carries out the reaction ATP + H2O + 4 H(+)(in) = ADP + phosphate + 5 H(+)(out). In terms of biological role, produces ATP from ADP in the presence of a proton gradient across the membrane. The catalytic sites are hosted primarily by the beta subunits. This chain is ATP synthase subunit beta, found in Geotalea uraniireducens (strain Rf4) (Geobacter uraniireducens).